Reading from the N-terminus, the 122-residue chain is Large ribosomal subunit protein uL14 (122 aa).

The protein belongs to the universal ribosomal protein uL14 family. Part of the 50S ribosomal subunit. Forms a cluster with proteins L3 and L19. In the 70S ribosome, L14 and L19 interact and together make contacts with the 16S rRNA in bridges B5 and B8.

Binds to 23S rRNA. Forms part of two intersubunit bridges in the 70S ribosome. This is Large ribosomal subunit protein uL14 from Acinetobacter baumannii (strain SDF).